The sequence spans 276 residues: Omega-amidase NIT2 (276 aa).

In terms of domain architecture, CN hydrolase spans 4 to 248 (FRLALIQLQI…EAIVYSDIDL (245 aa)). S26 bears the Phosphoserine mark. The Proton acceptor role is filled by E43. The residue at position 68 (K68) is an N6-acetyllysine; alternate. K68 is modified (N6-succinyllysine; alternate). K112 serves as the catalytic Proton donor. N6-succinyllysine occurs at positions 123 and 130. C153 acts as the Nucleophile in catalysis.

As to quaternary structure, homodimer. As to expression, detected in fetal brain (at protein level). Ubiquitous. Detected in heart, brain, placenta, lung, liver, skeletal muscle, kidney, pancreas, prostate, spleen, thymus, prostate, testis, ovary, small intestine and colon.

Its subcellular location is the cytoplasm. The enzyme catalyses a monoamide of a dicarboxylate + H2O = a dicarboxylate + NH4(+). It catalyses the reaction 2-oxoglutaramate + H2O = 2-oxoglutarate + NH4(+). It carries out the reaction 2-oxosuccinamate + H2O = oxaloacetate + NH4(+). Functionally, has omega-amidase activity. The role of omega-amidase is to remove potentially toxic intermediates by converting 2-oxoglutaramate and 2-oxosuccinamate to biologically useful 2-oxoglutarate and oxaloacetate, respectively. In Homo sapiens (Human), this protein is Omega-amidase NIT2 (NIT2).